We begin with the raw amino-acid sequence, 29 residues long: Small ribosomal subunit protein uS7 (29 aa).

Residues 1 to 29 (ELIGAANRDTKSFSINRKDAKERVAKAAR) are disordered. The segment covering 8-29 (RDTKSFSINRKDAKERVAKAAR) has biased composition (basic and acidic residues).

The protein belongs to the universal ribosomal protein uS7 family. Part of the 30S ribosomal subunit.

In terms of biological role, one of the primary rRNA binding proteins, it binds directly to 16S rRNA where it nucleates assembly of the head domain of the 30S subunit. Is located at the subunit interface close to the decoding center. This is Small ribosomal subunit protein uS7 (rps7) from Methanosarcina thermophila.